The primary structure comprises 530 residues: Ubiquitin carboxyl-terminal hydrolase 17-like protein 10 (530 aa).

The USP domain occupies 80-375 (AGLQNMGNTC…QAYVLFYIQK (296 aa)). Residue Cys-89 is the Nucleophile of the active site. His-334 acts as the Proton acceptor in catalysis. Composition is skewed to basic and acidic residues over residues 382–392 (SESVSRGREPR) and 398–410 (DTDRRATQGELKR). Disordered stretches follow at residues 382 to 410 (SESVSRGREPRALGVEDTDRRATQGELKR) and 477 to 530 (NHHP…LVCQ). Residues 484-495 (SSLLNLSSTTPT) are compositionally biased toward low complexity. Residues 496-505 (DQESMNTGTL) show a composition bias toward polar residues. The segment covering 510–524 (GRTRRSKGKNKHSKR) has biased composition (basic residues).

The protein belongs to the peptidase C19 family. USP17 subfamily.

The protein resides in the nucleus. Its subcellular location is the endoplasmic reticulum. It carries out the reaction Thiol-dependent hydrolysis of ester, thioester, amide, peptide and isopeptide bonds formed by the C-terminal Gly of ubiquitin (a 76-residue protein attached to proteins as an intracellular targeting signal).. Deubiquitinating enzyme that removes conjugated ubiquitin from specific proteins to regulate different cellular processes that may include cell proliferation, progression through the cell cycle, apoptosis, cell migration, and the cellular response to viral infection. The polypeptide is Ubiquitin carboxyl-terminal hydrolase 17-like protein 10 (USP17L10) (Homo sapiens (Human)).